The sequence spans 887 residues: Exocyst complex component SEC3A (887 aa).

2 coiled-coil regions span residues 221–248 (IGEAEAFSERLKRELQALEAANVHAILE) and 281–301 (LRHMREDIESIETRNNKLEMQ). The interval 542-581 (GAGNDKKSQSNNDDGNDDDDLGIMDIDETDKKPGKNSPDL) is disordered. Residues 555-569 (DGNDDDDLGIMDIDE) are compositionally biased toward acidic residues.

Belongs to the SEC3 family. In terms of assembly, the exocyst complex is composed of SEC3, SEC5, SEC6, SEC8, SEC10, EXO70A1 and EXO84B. Interacts with EXO70A1, SEC5A and ICR1, but not with ICR2. Binds to EXO70H1. Binds directly to B1L. As to expression, widely expressed. Preferentially expressed in tissues containing dividing and expanding cells, such as the shoot apical meristem, root tip, lateral root primordia and developing embryos.

It is found in the cytoplasm. The protein localises to the cytosol. It localises to the cell membrane. The protein resides in the cytoskeleton. Its subcellular location is the phragmoplast. It is found in the secreted. The protein localises to the extracellular exosome. Its function is as follows. Component of the exocyst complex involved in the docking of exocytic vesicles with fusion sites on the plasma membrane during regulated or polarized secretion. Involved in polarized cell growth and organ morphogenesis. During cytokinesis, involved in cell plate initiation, cell plate maturation and formation of new primary cell wall. During cytokinesis, involved in cell plate initiation, cell plate maturation and formation of new primary cell wall. The protein is Exocyst complex component SEC3A of Arabidopsis thaliana (Mouse-ear cress).